We begin with the raw amino-acid sequence, 235 residues long: Ribosomal RNA small subunit methyltransferase G (235 aa).

S-adenosyl-L-methionine-binding positions include Gly-75, Phe-80, 126–127 (AE), and Arg-145.

It belongs to the methyltransferase superfamily. RNA methyltransferase RsmG family.

It localises to the cytoplasm. Specifically methylates the N7 position of a guanine in 16S rRNA. The chain is Ribosomal RNA small subunit methyltransferase G from Carboxydothermus hydrogenoformans (strain ATCC BAA-161 / DSM 6008 / Z-2901).